A 1118-amino-acid chain; its full sequence is Pleckstrin homology domain-containing family A member 7 (1118 aa).

WW domains lie at 8 to 41 (DTLP…HPRT) and 53 to 86 (SDLP…HPVT). The segment covering 100–113 (EEPHPHMSKPERNQ) has biased composition (basic and acidic residues). The interval 100-145 (EEPHPHMSKPERNQRPSSMVSETSTAGTTSTLEAKPGPKIVKSSSK) is disordered. Over residues 114 to 131 (RPSSMVSETSTAGTTSTL) the composition is skewed to polar residues. The 119-residue stretch at 163–281 (PVVVRGWLHK…WVRAMNQAAQ (119 aa)) folds into the PH domain. 2 stretches are compositionally biased toward basic and acidic residues: residues 334 to 355 (FNRR…EGRR) and 434 to 443 (HWTKAQKGDG). Disordered regions lie at residues 334-512 (FNRR…RRAH) and 528-629 (QFRH…RRSM). The span at 452 to 481 (LPRQGPSQPLSFPENYQSLPKSTRHLSGSS) shows a compositional bias: polar residues. The span at 494–512 (YAQDRASHLKMSSEERRAH) shows a compositional bias: basic and acidic residues. 6 positions are modified to phosphoserine: Ser-533, Ser-542, Ser-566, Ser-601, Ser-605, and Ser-609. The segment at 535-693 (TAPIGAGSPE…AESDIDVKLS (159 aa)) is interaction with CTNND1. Pro residues predominate over residues 564 to 579 (PPSPSDIPPPGPPRPF). Residues 586-602 (TPAERVTVKPPEQRRSV) are compositionally biased toward basic and acidic residues. Positions 697-798 (EQDRILQDLE…LQEQHRRAFF (102 aa)) form a coiled coil. 2 disordered regions span residues 839-873 (KTVP…VRTP) and 886-968 (VPYR…EQGQ). Phosphoserine occurs at positions 857 and 864. Thr-867 is modified (phosphothreonine). 3 positions are modified to phosphoserine: Ser-868, Ser-900, and Ser-904. The span at 930–939 (DQPPAVPPLP) shows a compositional bias: pro residues. A compositionally biased stretch (basic and acidic residues) spans 955–966 (RQSDERKRDREQ). Phosphoserine is present on residues Ser-983 and Leu-990. Residues 1003–1024 (GSESRYQTLPGRGLSGSTSRLQ) are disordered. The stretch at 1064–1091 (QRGKMSAEEQLERMKRHQKALVRERKRT) forms a coiled coil.

As to quaternary structure, interacts with CAMSAP3 and CTNND1. Interacts (via WW domains) with TSPAN33 (via cytoplasmic domain) and with PDZD11; the interaction with TSPAN33 is dependent on PDZD11 being bound to PLEKHA7 and facilitates the docking of ADAM10 to zonula adherens through interaction of TSPAN33 with ADAM10. As to expression, expressed in kidney and lung (at protein level).

It is found in the cell junction. Its subcellular location is the adherens junction. The protein resides in the cytoplasm. The protein localises to the cytoskeleton. It localises to the microtubule organizing center. It is found in the centrosome. Functionally, required for zonula adherens biogenesis and maintenance. Acts via its interaction with CAMSAP3, which anchors microtubules at their minus-ends to zonula adherens, leading to the recruitment of KIFC3 kinesin to the junctional site. Mediates docking of ADAM10 to zonula adherens through a PDZD11-dependent interaction with the ADAM10-binding protein TSPAN33. This is Pleckstrin homology domain-containing family A member 7 (Plekha7) from Mus musculus (Mouse).